Reading from the N-terminus, the 133-residue chain is Small ribosomal subunit protein uS8 (133 aa).

The protein belongs to the universal ribosomal protein uS8 family. In terms of assembly, part of the 30S ribosomal subunit. Contacts proteins S5 and S12.

One of the primary rRNA binding proteins, it binds directly to 16S rRNA central domain where it helps coordinate assembly of the platform of the 30S subunit. This is Small ribosomal subunit protein uS8 from Chloroflexus aurantiacus (strain ATCC 29364 / DSM 637 / Y-400-fl).